The primary structure comprises 422 residues: Charged multivesicular body protein 7 (422 aa).

The stretch at 234–304 (KLLSERLQSA…ERISAAETDR (71 aa)) forms a coiled coil. Residues 394–422 (RPTEWKMDQAAHSPADGSFLRSVPEPMLQ) form a disordered region.

This sequence belongs to the SNF7 family.

It localises to the cytoplasm. The protein resides in the nucleus envelope. Functionally, ESCRT-III-like protein required to recruit the ESCRT-III complex to the nuclear envelope during late anaphase. Together with SPAST, the ESCRT-III complex promotes nuclear envelope sealing and mitotic spindle disassembly during late anaphase. Plays a role in the endosomal sorting pathway. This Xenopus laevis (African clawed frog) protein is Charged multivesicular body protein 7 (chmp7).